We begin with the raw amino-acid sequence, 390 residues long: (S)-8-oxocitronellyl enol synthase CYC2 (390 aa).

Residues 35-37 (TGI), 63-64 (RR), 81-82 (DI), 105-106 (TW), and Gln-143 each bind NADP(+). Active-site residues include Lys-147 and Tyr-179. Lys-147 and Tyr-179 together coordinate substrate. Residues Tyr-179 and 213-215 (SMM) contribute to the NADP(+) site.

Belongs to the short-chain dehydrogenases/reductases (SDR) family. Highly divergent.

The enzyme catalyses (S)-8-oxocitronellyl enol + NADP(+) = (6E)-8-oxogeranial + NADPH + H(+). It catalyses the reaction (S)-8-oxocitronellyl enol + NAD(+) = (6E)-8-oxogeranial + NADH + H(+). In terms of biological role, iridoid synthase that catalyzes the first step in generation of the iridoid ring scaffold using the linear monoterpene (6E)-8-oxogeranial as substrate. Iridoids comprise a large family of distinctive bicyclic monoterpenes that possess a wide range of pharmacological activities, including anticancer, anti-inflammatory, antifungal and antibacterial activities. This is (S)-8-oxocitronellyl enol synthase CYC2 from Camptotheca acuminata (Happy tree).